Consider the following 178-residue polypeptide: Protein RICE FLOWERING LOCUS T 1 (178 aa).

Belongs to the phosphatidylethanolamine-binding protein family. Interacts with FTIP1. As to expression, expressed in leaf vascular tissues. Specifically expressed in the phloem including companion cells.

It is found in the cytoplasm. The protein localises to the nucleus. The protein resides in the endoplasmic reticulum. Probable mobile flower-promoting signal (florigen) that moves from the leaf to the shoot apical meristem (SAM) and induces flowering. Promotes the transition from vegetative growth to flowering under long day (LD) conditions. Acts upstream of MADS14 and MADS15. May also participate in the promotion of flowering under short day (SD) conditions. The polypeptide is Protein RICE FLOWERING LOCUS T 1 (Oryza sativa subsp. japonica (Rice)).